The primary structure comprises 527 residues: Bifunctional purine biosynthesis protein PurH (527 aa).

In terms of domain architecture, MGS-like spans Met1–Thr149.

This sequence belongs to the PurH family.

It carries out the reaction (6R)-10-formyltetrahydrofolate + 5-amino-1-(5-phospho-beta-D-ribosyl)imidazole-4-carboxamide = 5-formamido-1-(5-phospho-D-ribosyl)imidazole-4-carboxamide + (6S)-5,6,7,8-tetrahydrofolate. The enzyme catalyses IMP + H2O = 5-formamido-1-(5-phospho-D-ribosyl)imidazole-4-carboxamide. Its pathway is purine metabolism; IMP biosynthesis via de novo pathway; 5-formamido-1-(5-phospho-D-ribosyl)imidazole-4-carboxamide from 5-amino-1-(5-phospho-D-ribosyl)imidazole-4-carboxamide (10-formyl THF route): step 1/1. It participates in purine metabolism; IMP biosynthesis via de novo pathway; IMP from 5-formamido-1-(5-phospho-D-ribosyl)imidazole-4-carboxamide: step 1/1. This is Bifunctional purine biosynthesis protein PurH from Xanthomonas euvesicatoria pv. vesicatoria (strain 85-10) (Xanthomonas campestris pv. vesicatoria).